Reading from the N-terminus, the 75-residue chain is Ferredoxin-thioredoxin reductase, variable chain (75 aa).

An interaction with ferredoxin region spans residues 43–46 (QGRP).

The protein belongs to the ferredoxin thioredoxin reductase alpha subunit family. Heterodimer of subunit A (variable subunit) and subunit B (catalytic subunit). Heterodimeric FTR forms a complex with ferredoxin and thioredoxin.

Functionally, variable subunit of the ferredoxin-thioredoxin reductase (FTR), which catalyzes the two-electron reduction of thioredoxins by the electrons provided by reduced ferredoxin. This is Ferredoxin-thioredoxin reductase, variable chain (ftrV) from Synechocystis sp. (strain ATCC 27184 / PCC 6803 / Kazusa).